Here is a 278-residue protein sequence, read N- to C-terminus: SLAM family member 8 (278 aa).

An N-terminal signal peptide occupies residues 1–20 (MWSLWSLLLFEALLPVVVVS). Residues 21-231 (VQVLSKVGDS…AASGKASYKD (211 aa)) lie on the Extracellular side of the membrane. N-linked (GlcNAc...) asparagine glycosylation is found at Asn-83 and Asn-154. One can recognise an Ig-like C2-type domain in the interval 126-213 (PEVQVFTAAA…PVSWDMTTVT (88 aa)). Cys-150 and Cys-199 are disulfide-bonded. Residues 232 to 252 (VLLVVVPITLFLILAGLFGAW) traverse the membrane as a helical segment. Residues 253–278 (HHGLCSGKKKDACTDGVLPETENALV) are Cytoplasmic-facing.

Its subcellular location is the membrane. May play a role in B-lineage commitment and/or modulation of signaling through the B-cell receptor. This is SLAM family member 8 (Slamf8) from Mus musculus (Mouse).